A 695-amino-acid chain; its full sequence is MDLHSLLELGTKPTAPHVRNKKVILFDTNHQVSICNQIIDAINSGIDLGDLLEGGLLTLCVEHYYNSDKDKFNTSPIAKYLRDAGYEFDVIKNADATRFLDVIPNEPHYSPLILALKTLESTESQRGRIGLFLSFCSLFLPKLVVGDRASIEKALRQVTVHQEQGIVTYPNHWLTTGHMKVIFGILRSSFILKFVLIHQGVNLVTGHDAYDSIISNSVGQTRFSGLLIVKTVLEFILQKTDSGVTLHPLVRTSKVKNEVASFKQALSNLARHGEYAPFARVLNLSGINNLEHGLYPQLSAIALGVATAHGSTLAGVNVGEQYQQLREAAHDAEVKLQRRHEHQEIQAIAEDDEERKILEQFHLQKTEITHSQTLAVLSQKREKLARLAAEIENNIVEDQGFKQSQNRVSQSFLNDPTPVEVTVQARPVNRPTALPPPVDDKIEHESTEDSSSSSSFVDLNDPFALLNEDEDTLDDSVMIPSTTSREFQGIPESPGQSQDLDNSQGKQEDESTNPIKKQFLRYQELPPVQEDDESEYTTDSQESIDQPGSDNEQGVDLPPPPLYTQEKRQDPIQHPAASSQDPFGSIGDVNGDILEPIRSPSSPSAPQEDTRAREAYELSPDFTNYEDNQQNWPQRVVTKKGRTFLYPNDLLQTSPPESLVTALVEEYQNPVSAKELQADWPDMSFDERRHVAMNL.

Coiled-coil stretches lie at residues 316-341 and 372-399; these read VNVGEQYQQLREAAHDAEVKLQRRHE and QTLAVLSQKREKLARLAAEIENNIVEDQ. 2 disordered regions span residues 424 to 458 and 483 to 615; these read QARPVNRPTALPPPVDDKIEHESTEDSSSSSSFVD and TSRE…AREA. Positions 438 to 447 are enriched in basic and acidic residues; it reads VDDKIEHEST. Polar residues-rich tracts occupy residues 494–505 and 537–552; these read PGQSQDLDNSQG and TTDSQESIDQPGSDNE. The short motif at 603-606 is the PTAP/PSAP motif element; that stretch reads PSAP.

It belongs to the filoviruses nucleoprotein family. Homooligomer. Homomultimerizes to form the nucleocapsid. Binds to viral genomic RNA. Interacts with VP35 and VP30 to form the nucleocapsid. Also interacts with VP24 and VP40. In terms of processing, phosphorylated.

It is found in the virion. It localises to the host cytoplasm. In terms of biological role, encapsidates the genome, protecting it from nucleases. The encapsidated genomic RNA is termed the nucleocapsid and serves as template for transcription and replication. During replication, encapsidation by NP is coupled to RNA synthesis and all replicative products are resistant to nucleases. The protein is Nucleoprotein (NP) of Lake Victoria marburgvirus (strain Ozolin-75) (MARV).